The sequence spans 95 residues: UPF0298 protein LVIS_1401 (95 aa).

The protein belongs to the UPF0298 family.

It localises to the cytoplasm. This Levilactobacillus brevis (strain ATCC 367 / BCRC 12310 / CIP 105137 / JCM 1170 / LMG 11437 / NCIMB 947 / NCTC 947) (Lactobacillus brevis) protein is UPF0298 protein LVIS_1401.